Reading from the N-terminus, the 241-residue chain is Proteasome subunit beta type-6 (241 aa).

The propeptide occupies 1 to 19 (MATIASEYSSEASNTPIEH).

The protein belongs to the peptidase T1B family. As to quaternary structure, the 26S proteasome consists of a 20S proteasome core and two 19S regulatory subunits. The 20S proteasome core is composed of 28 subunits that are arranged in four stacked rings, resulting in a barrel-shaped structure. The two end rings are each formed by seven alpha subunits, and the two central rings are each formed by seven beta subunits. The catalytic chamber with the active sites is on the inside of the barrel.

Its subcellular location is the cytoplasm. The protein localises to the nucleus. Functionally, non-catalytic component of the proteasome which degrades poly-ubiquitinated proteins in the cytoplasm and in the nucleus. It is essential for the regulated turnover of proteins and for the removal of misfolded proteins. The proteasome is a multicatalytic proteinase complex that is characterized by its ability to cleave peptides with Arg, Phe, Tyr, Leu, and Glu adjacent to the leaving group at neutral or slightly basic pH. It has an ATP-dependent proteolytic activity. This chain is Proteasome subunit beta type-6 (PRE7), found in Saccharomyces cerevisiae (strain ATCC 204508 / S288c) (Baker's yeast).